We begin with the raw amino-acid sequence, 314 residues long: DNA-directed RNA polymerase subunit alpha (314 aa).

The segment at 1–228 (MIEIEKPKIE…EHLNIFVGLT (228 aa)) is alpha N-terminal domain (alpha-NTD). Positions 245–314 (KEKVLEMTIE…ELGLSLRKDD (70 aa)) are alpha C-terminal domain (alpha-CTD).

The protein belongs to the RNA polymerase alpha chain family. In terms of assembly, homodimer. The RNAP catalytic core consists of 2 alpha, 1 beta, 1 beta' and 1 omega subunit. When a sigma factor is associated with the core the holoenzyme is formed, which can initiate transcription.

It catalyses the reaction RNA(n) + a ribonucleoside 5'-triphosphate = RNA(n+1) + diphosphate. DNA-dependent RNA polymerase catalyzes the transcription of DNA into RNA using the four ribonucleoside triphosphates as substrates. The protein is DNA-directed RNA polymerase subunit alpha of Geobacillus kaustophilus (strain HTA426).